The following is a 263-amino-acid chain: 4-hydroxy-2-oxo-heptane-1,7-dioate aldolase (263 aa).

The active-site Proton acceptor is the histidine 45. Position 147 (glutamine 147) interacts with substrate. Glutamate 149 is a binding site for a divalent metal cation. 2 residues coordinate substrate: alanine 174 and aspartate 175. Aspartate 175 is an a divalent metal cation binding site.

It belongs to the HpcH/HpaI aldolase family. Homohexamer; trimer of dimers. A divalent metal cation is required as a cofactor.

The enzyme catalyses 4-hydroxy-2-oxoheptanedioate = succinate semialdehyde + pyruvate. The protein operates within aromatic compound metabolism; 4-hydroxyphenylacetate degradation; pyruvate and succinate semialdehyde from 4-hydroxyphenylacetate: step 7/7. In terms of biological role, catalyzes the reversible retro-aldol cleavage of 4-hydroxy-2-ketoheptane-1,7-dioate (HKHD) to pyruvate and succinic semialdehyde. This Salmonella paratyphi A (strain ATCC 9150 / SARB42) protein is 4-hydroxy-2-oxo-heptane-1,7-dioate aldolase.